Reading from the N-terminus, the 1293-residue chain is DNA repair protein complementing XP-C cells homolog (1293 aa).

Disordered stretches follow at residues 1–199 (MSDE…FEDK), 217–239 (ERTRDALSKRNVTATPPRSQAAT), 255–341 (QSVE…NISG), 514–640 (DLIP…SKCL), and 658–919 (LSSK…EPAK). Basic and acidic residues predominate over residues 18 to 30 (DEWKPSKDVKGGE). Phosphoserine is present on residues serine 31, serine 32, and serine 37. Positions 31 to 43 (SSDDDDSDFDELQ) are enriched in acidic residues. Residues 51–60 (SSGRSSAVAG) show a composition bias toward low complexity. 2 stretches are compositionally biased toward polar residues: residues 101 to 130 (FPTSPSQQKENTPRASGSKNAKTPNESGAR) and 226 to 238 (RNVTATPPRSQAA). Over residues 288–301 (SKTKSTRIKRHTKT) the composition is skewed to basic residues. A compositionally biased stretch (acidic residues) spans 313–335 (DTDDSDFEEVADADLSSDQDDGE). Over residues 520-578 (LRPDDKNKSQTVESERESEDEKPKKDKKAGKPAEKESSKSTISKEAEKKNNAKKAEAKP) the composition is skewed to basic and acidic residues. Phosphoserine occurs at positions 533 and 537. Residues 580 to 594 (SKSTTKGSETTKSGT) show a composition bias toward low complexity. Residues 598–612 (VKKELSLSSKLVEKS) are compositionally biased toward basic and acidic residues. Over residues 658 to 692 (LSSKLVLKSKNQSSFSSNKSDTSFEENPSTSSSSK) the composition is skewed to low complexity. Basic and acidic residues predominate over residues 693 to 711 (SLKEETAKLSSSKLEDKKV). The segment covering 720-737 (KVQSSLLKRVTTQNISES) has biased composition (polar residues). Residues 806-818 (HLQEQRNTRETRS) are compositionally biased toward basic and acidic residues. 2 positions are modified to phosphoserine: serine 908 and serine 911. 3 consecutive short sequence motifs (nuclear localization signal) follow at residues 922–938 (KKAPVLPKSVQNLRKDR), 1195–1211 (KKTVHLRLPGLMRICKK), and 1275–1291 (KKLIKGLLIRERLKKKY).

Belongs to the XPC family. As to quaternary structure, heterodimer.

The protein localises to the nucleus. In terms of biological role, involved in DNA excision repair. May play a part in DNA damage recognition and/or in altering chromatin structure to allow access by damage-processing enzymes. Its function is as follows. Involved in nucleotide excision repair of DNA damaged with UV light, bulky adducts, or cross-linking agents. This Drosophila melanogaster (Fruit fly) protein is DNA repair protein complementing XP-C cells homolog.